Reading from the N-terminus, the 432-residue chain is Ribosomal protein uS12 methylthiotransferase RimO (432 aa).

The MTTase N-terminal domain maps to His4 to Arg120. Residues Cys13, Cys49, Cys83, Cys144, Cys148, and Cys151 each coordinate [4Fe-4S] cluster. The Radical SAM core domain maps to Leu130–Glu359. The region spanning Gln362–Ala429 is the TRAM domain.

This sequence belongs to the methylthiotransferase family. RimO subfamily. It depends on [4Fe-4S] cluster as a cofactor.

The protein localises to the cytoplasm. It catalyses the reaction L-aspartate(89)-[ribosomal protein uS12]-hydrogen + (sulfur carrier)-SH + AH2 + 2 S-adenosyl-L-methionine = 3-methylsulfanyl-L-aspartate(89)-[ribosomal protein uS12]-hydrogen + (sulfur carrier)-H + 5'-deoxyadenosine + L-methionine + A + S-adenosyl-L-homocysteine + 2 H(+). In terms of biological role, catalyzes the methylthiolation of an aspartic acid residue of ribosomal protein uS12. The protein is Ribosomal protein uS12 methylthiotransferase RimO of Chlorobium phaeobacteroides (strain DSM 266 / SMG 266 / 2430).